The primary structure comprises 123 residues: Putative outer membrane protein CPn_0818/CP_1053/CPj0818/CpB0847 (123 aa).

The N-terminal stretch at 1–30 is a signal peptide; that stretch reads MKRQKRKQSITLIEMMVVITLIGIIGGALA.

It is found in the cell outer membrane. The polypeptide is Putative outer membrane protein CPn_0818/CP_1053/CPj0818/CpB0847 (Chlamydia pneumoniae (Chlamydophila pneumoniae)).